The sequence spans 91 residues: uncharacterized protein (91 aa).

3 helical membrane passes run 4–21 (YAIISFLLGIAFGFLRRG), 28–50 (IIEVIFVSLLLGLVSGIALSHAV), and 60–82 (VKAFGLIVAALIYAIFFAAGTYL).

The protein localises to the cell membrane. This is an uncharacterized protein from Archaeoglobus fulgidus (strain ATCC 49558 / DSM 4304 / JCM 9628 / NBRC 100126 / VC-16).